The chain runs to 96 residues: Conotoxin Mr15.1 (96 aa).

The first 20 residues, 1–20, serve as a signal peptide directing secretion; the sequence is MSTLKMMLLILLLLLPLATF. Positions 21–57 are excised as a propeptide; that stretch reads DSDGQAIPGGGIPSAVNSRVGRLLGGDEKSGRSLEKR.

The protein belongs to the conotoxin N superfamily. Contains 4 disulfide bonds. As to expression, expressed by the venom duct.

Its subcellular location is the secreted. This chain is Conotoxin Mr15.1, found in Conus marmoreus (Marble cone).